A 232-amino-acid polypeptide reads, in one-letter code: MSILASIQRQVTPIHPEGYPFIGGFAVATLVLSWLWSPLGWLGLMATLWCAYFFRDPARLTPLDESIVISPADGIVSSVGYHMPPPELGLGAEPMQRISVFMSVFDCHVNRAPVTGRVTKIVYRPGLFLNADLDKASMDNERNGLVIENNNGRFGVVQIAGLVARRIVCFAEKGDHLTTGERFGLIRFGSRLDVYMPEGVRPLVGVGAKAVAGETILADRQTDKPRPAFRYG.

Ser190 functions as the Schiff-base intermediate with substrate; via pyruvic acid in the catalytic mechanism. At Ser190 the chain carries Pyruvic acid (Ser); by autocatalysis.

This sequence belongs to the phosphatidylserine decarboxylase family. PSD-A subfamily. Heterodimer of a large membrane-associated beta subunit and a small pyruvoyl-containing alpha subunit. It depends on pyruvate as a cofactor. Is synthesized initially as an inactive proenzyme. Formation of the active enzyme involves a self-maturation process in which the active site pyruvoyl group is generated from an internal serine residue via an autocatalytic post-translational modification. Two non-identical subunits are generated from the proenzyme in this reaction, and the pyruvate is formed at the N-terminus of the alpha chain, which is derived from the carboxyl end of the proenzyme. The post-translation cleavage follows an unusual pathway, termed non-hydrolytic serinolysis, in which the side chain hydroxyl group of the serine supplies its oxygen atom to form the C-terminus of the beta chain, while the remainder of the serine residue undergoes an oxidative deamination to produce ammonia and the pyruvoyl prosthetic group on the alpha chain.

The protein resides in the cell membrane. The enzyme catalyses a 1,2-diacyl-sn-glycero-3-phospho-L-serine + H(+) = a 1,2-diacyl-sn-glycero-3-phosphoethanolamine + CO2. Its pathway is phospholipid metabolism; phosphatidylethanolamine biosynthesis; phosphatidylethanolamine from CDP-diacylglycerol: step 2/2. Catalyzes the formation of phosphatidylethanolamine (PtdEtn) from phosphatidylserine (PtdSer). The sequence is that of Phosphatidylserine decarboxylase proenzyme from Beijerinckia indica subsp. indica (strain ATCC 9039 / DSM 1715 / NCIMB 8712).